A 159-amino-acid polypeptide reads, in one-letter code: Superoxide dismutase [Cu-Zn] (159 aa).

Cu cation is bound by residues histidine 47, histidine 49, and histidine 64. Cysteine 58 and cysteine 150 form a disulfide bridge. Zn(2+) is bound by residues histidine 64, histidine 72, histidine 81, and aspartate 84. A Cu cation-binding site is contributed by histidine 121.

It belongs to the Cu-Zn superoxide dismutase family. It depends on Cu cation as a cofactor. Zn(2+) is required as a cofactor.

The protein resides in the cytoplasm. It carries out the reaction 2 superoxide + 2 H(+) = H2O2 + O2. Destroys radicals which are normally produced within the cells and which are toxic to biological systems. In Haemonchus contortus (Barber pole worm), this protein is Superoxide dismutase [Cu-Zn] (SOD).